Here is a 467-residue protein sequence, read N- to C-terminus: Uronate isomerase (467 aa).

Belongs to the metallo-dependent hydrolases superfamily. Uronate isomerase family.

The catalysed reaction is D-glucuronate = D-fructuronate. It carries out the reaction aldehydo-D-galacturonate = keto-D-tagaturonate. It functions in the pathway carbohydrate metabolism; pentose and glucuronate interconversion. The chain is Uronate isomerase from Histophilus somni (strain 2336) (Haemophilus somnus).